The primary structure comprises 310 residues: Ribosomal RNA small subunit methyltransferase H (310 aa).

Residues 47-49 (GGH), Asp-66, Phe-93, Asp-108, and Gln-115 each bind S-adenosyl-L-methionine.

This sequence belongs to the methyltransferase superfamily. RsmH family.

The protein resides in the cytoplasm. The enzyme catalyses cytidine(1402) in 16S rRNA + S-adenosyl-L-methionine = N(4)-methylcytidine(1402) in 16S rRNA + S-adenosyl-L-homocysteine + H(+). In terms of biological role, specifically methylates the N4 position of cytidine in position 1402 (C1402) of 16S rRNA. This chain is Ribosomal RNA small subunit methyltransferase H, found in Prochlorococcus marinus (strain MIT 9303).